The chain runs to 675 residues: MKNISFKVNDFQYTINNKLTLIQACLKNKVDISRFCFHEKLSIAGNCRMCLVEDLKQVKPLASCAINVSNSMNIYTNTLKVKKARESVLEFLLANHPLDCPICDQGGECDLQDQSVVFGSDRGRFYEFKRSVEDKDCGPLIKTIMNRCIHCTRCVRFSNEVAGVNILGVTGRGSKMEIGFYIENLMRSELSGNVIDLCPVGALTSKPFAFTSRPWELKSYNSIDVLDSLHSNIRVDIRGTKIMRILPRVNSELNEDWITDKIRFSYDSFRRQRLYDPMVKISGSFLKIGWKKAMLFIKKFFCNFLGFNHSSFIPLRGYIGDYLDLETIYTFKKFLLLNGSNFFLPSSSYNDLTALYSFNTPLTRLDEGDFCILLDVNLRVELPIVNSRIKQLVSKKMLPVFVLGFYSNFNYFVKHISNSSKTLLHVLEGSHWLSAKISKKFSSKPIFLIGDSSSLLKGSLIVPLFNFTNVICDNWNGLNIISNDSSYLSTKEFNLSSSHSQNSHLLNFPINFVLNYDKAVLVDSSAFQIYQGHHGDTNAINSNLIFPSTSFIEKNSFYSNSLAIVQKTKKILFSPGNSRDDWKILNALIDNFGFSYFKVRNSFDLVSFLSESTPFILYKRSFSFKCFGFYEQLVYHFFNYFSVNNNYYIYDSITRNSKIMSLCFNKFKMKGYNFF.

In terms of domain architecture, 2Fe-2S ferredoxin-type spans 2–80 (KNISFKVNDF…SMNIYTNTLK (79 aa)). 4 residues coordinate [2Fe-2S] cluster: Cys36, Cys47, Cys50, and Cys64. Residues 80–119 (KVKKARESVLEFLLANHPLDCPICDQGGECDLQDQSVVFG) enclose the 4Fe-4S His(Cys)3-ligated-type domain. [4Fe-4S] cluster is bound by residues His96, Cys100, Cys103, Cys109, Cys148, Cys151, Cys154, and Cys198. The region spanning 217–273 (LKSYNSIDVLDSLHSNIRVDIRGTKIMRILPRVNSELNEDWITDKIRFSYDSFRRQR) is the 4Fe-4S Mo/W bis-MGD-type domain.

It belongs to the complex I 75 kDa subunit family. As to quaternary structure, complex I is composed of about 30 different subunits. [2Fe-2S] cluster is required as a cofactor. The cofactor is [4Fe-4S] cluster.

The protein resides in the mitochondrion inner membrane. The catalysed reaction is a ubiquinone + NADH + 5 H(+)(in) = a ubiquinol + NAD(+) + 4 H(+)(out). Core subunit of the mitochondrial membrane respiratory chain NADH dehydrogenase (Complex I) that is believed to belong to the minimal assembly required for catalysis. Complex I functions in the transfer of electrons from NADH to the respiratory chain. The immediate electron acceptor for the enzyme is believed to be ubiquinone. This is the largest subunit of complex I and it is a component of the iron-sulfur (IP) fragment of the enzyme. It may form part of the active site crevice where NADH is oxidized. This is NADH-ubiquinone oxidoreductase 75 kDa subunit (NAD11) from Acanthamoeba castellanii (Amoeba).